The following is a 977-amino-acid chain: Disks large-associated protein 3 (977 aa).

Residues 1-10 (MRGYHGDRGS) show a composition bias toward basic and acidic residues. 6 disordered regions span residues 1 to 24 (MRGY…QHMD), 52 to 96 (AGLG…MYPG), 137 to 167 (FHTL…ESPS), 181 to 289 (AKSH…CLDA), 398 to 417 (AMGD…SPKA), and 529 to 582 (PGSS…SADG). Residues 53–73 (GLGHLSPEGPLSLSEGPSSVG) are compositionally biased toward low complexity. Ser58 is modified (phosphoserine). Residues 74-87 (PEGGPGGVGAGGGS) show a composition bias toward gly residues. Residues 189–201 (PGKRDYNGPKADG) show a composition bias toward basic and acidic residues. Positions 221-245 (SHHHHHHHHHHHHQSRHGKRSKSKD) are enriched in basic residues. Positions 258–271 (GWWSSDDNLDSDSG) are enriched in low complexity. Phosphoserine occurs at positions 404, 407, 410, and 414. Over residues 538 to 547 (APPPIPPGSQ) the composition is skewed to pro residues. 2 positions are modified to phosphoserine: Ser641 and Ser643. 2 disordered regions span residues 739-788 (EGYP…RTSP) and 906-939 (EEKK…RQRQ). Basic and acidic residues-rich tracts occupy residues 767-777 (GRRDSWMERGS) and 925-939 (PVKE…RQRQ). Ser930, Ser933, and Ser965 each carry phosphoserine.

It belongs to the SAPAP family. As to quaternary structure, interacts with DLG4/PSD-95. In terms of tissue distribution, highly expressed in central and peripherical nervous system (at protein level).

It is found in the cell membrane. Its subcellular location is the postsynaptic density. The protein resides in the synapse. Its function is as follows. May play a role in the molecular organization of synapses and neuronal cell signaling. Could be an adapter protein linking ion channel to the subsynaptic cytoskeleton. May induce enrichment of PSD-95/SAP90 at the plasma membrane. The sequence is that of Disks large-associated protein 3 (Dlgap3) from Mus musculus (Mouse).